The following is a 259-amino-acid chain: Malonyl-[acyl-carrier protein] O-methyltransferase (259 aa).

The protein belongs to the methyltransferase superfamily.

It carries out the reaction malonyl-[ACP] + S-adenosyl-L-methionine = malonyl-[ACP] methyl ester + S-adenosyl-L-homocysteine. It functions in the pathway cofactor biosynthesis; biotin biosynthesis. Functionally, converts the free carboxyl group of a malonyl-thioester to its methyl ester by transfer of a methyl group from S-adenosyl-L-methionine (SAM). It allows to synthesize pimeloyl-ACP via the fatty acid synthetic pathway. This chain is Malonyl-[acyl-carrier protein] O-methyltransferase, found in Anoxybacillus flavithermus (strain DSM 21510 / WK1).